The primary structure comprises 246 residues: Serine protease 1 (246 aa).

An N-terminal signal peptide occupies residues 1 to 17; it reads MKTFIFLALLGAAVAFP. Residues 18–23 constitute a propeptide, activation peptide; that stretch reads VDDDDK. Residues 24-244 enclose the Peptidase S1 domain; that stretch reads IVGGYTCGAN…YVSWIKQTIA (221 aa). 6 disulfides stabilise this stretch: Cys-30–Cys-160, Cys-48–Cys-64, Cys-132–Cys-233, Cys-139–Cys-206, Cys-171–Cys-185, and Cys-196–Cys-220. Residue His-63 is the Charge relay system of the active site. Residues Glu-75, Asn-77, Val-80, and Glu-85 each coordinate Ca(2+). The active-site Charge relay system is the Asp-107. Substrate is bound by residues 194–195, 197–198, and Ser-200; these read DS and QG. The active-site Charge relay system is the Ser-200.

Belongs to the peptidase S1 family. As to quaternary structure, interacts with SERPINA1. Ca(2+) is required as a cofactor. Autocatalytic cleavage after Lys-23 leads to beta-trypsin by releasing a terminal hexapeptide. Subsequent cleavage after Lys-148 leads to alpha-trypsin. Further cleavage after Lys-193 yields pseudotrypsin. A cleavage may also occur after Arg-122. In terms of processing, not sulfated on tyrosine residue(s). Synthesized in the acinar cells of the pancreas.

The protein resides in the secreted. It localises to the extracellular space. The enzyme catalyses Preferential cleavage: Arg-|-Xaa, Lys-|-Xaa.. With respect to regulation, is inhibited by scorpion cyclotide trypsin inhibitor TopI1. The polypeptide is Serine protease 1 (PRSS1) (Bos taurus (Bovine)).